A 142-amino-acid polypeptide reads, in one-letter code: Baculoviral IAP repeat-containing protein 5 (142 aa).

One copy of the BIR repeat lies at 18–88 (RVSTFKNWPF…KHSSGCAFLS (71 aa)). At serine 20 the chain carries Phosphoserine; by AURKC. The residue at position 23 (lysine 23) is an N6-acetyllysine. A Phosphothreonine; by CDK1 and CDK15 modification is found at threonine 34. The residue at position 48 (threonine 48) is a Phosphothreonine; by CK2; in vitro. Zn(2+) contacts are provided by cysteine 57, cysteine 60, histidine 77, and cysteine 84. An N6-acetyllysine mark is found at lysine 90, lysine 110, lysine 112, and lysine 115. A Phosphothreonine; by AURKB modification is found at threonine 117.

It belongs to the IAP family. In terms of assembly, monomer or homodimer. Exists as a homodimer in the apo state and as a monomer in the CPC-bound state. The monomer protects cells against apoptosis more efficiently than the dimer. Only the dimeric form is capable of enhancing tubulin stability in cells. When phosphorylated, interacts with LAMTOR5/HBXIP; the resulting complex binds pro-CASP9, as well as active CASP9, but much less efficiently. Component of the chromosomal passenger complex (CPC) composed of at least BIRC5/survivin, CDCA8/borealin, INCENP, AURKB or AURKC; in the complex forms a triple-helix bundle-based subcomplex with INCENP and CDCA8. Interacts with JTB. Interacts (via BIR domain) with histone H3 phosphorylated at 'Thr-3' (H3pT3). Interacts with EVI5. Interacts with GTP-bound RAN in both the S and M phases of the cell cycle. Interacts with USP9X. Interacts with tubulin. Interacts with BIRC2/c-IAP1. The monomeric form interacts with XIAP/BIRC4. Both the dimeric and monomeric form can interact with DIABLO/SMAC. Interacts with BIRC6/bruce. Interacts with FBXL7; this interaction facilitates the polyubiquitination and subsequent proteasomal degradation of BIRC5 by the SCF(FBXL7) E3 ubiquitin-protein ligase complex. Ubiquitinated by the Cul9-RING ubiquitin-protein ligase complex, leading to its degradation. Ubiquitination is required for centrosomal targeting. Deubiquitinated by USP35 or USP38; leading to stabilization. In terms of processing, in vitro phosphorylation at Thr-117 by AURKB prevents interaction with INCENP and localization to mitotic chromosomes. Phosphorylation at Thr-48 by CK2 is critical for its mitotic and anti-apoptotic activities. Phosphorylation at Thr-34 by CDK15 is critical for its anti-apoptotic activity. Phosphorylation at Ser-20 by AURKC is critical for regulation of proper chromosome alignment and segregation, and possibly cytokinesis. As to expression, expressed in spleen, lung, brain, heart, kidney and intestine (at protein level). Expressed in cochlea including the organ of Corti, the lateral wall, the interdental cells of the Limbus as well as in cells of the cochlear nerve and the spiral ganglions (at protein level). Also expressed in Schwann cells (at protein level). Not expressed in cells of the inner and outer sulcus or the Reissner's membrane (at protein level).

The protein localises to the cytoplasm. The protein resides in the nucleus. It localises to the chromosome. Its subcellular location is the centromere. It is found in the cytoskeleton. The protein localises to the spindle. The protein resides in the kinetochore. It localises to the midbody. Functionally, multitasking protein that has dual roles in promoting cell proliferation and preventing apoptosis. Component of a chromosome passage protein complex (CPC) which is essential for chromosome alignment and segregation during mitosis and cytokinesis. Acts as an important regulator of the localization of this complex; directs CPC movement to different locations from the inner centromere during prometaphase to midbody during cytokinesis and participates in the organization of the center spindle by associating with polymerized microtubules. Involved in the recruitment of CPC to centromeres during early mitosis via association with histone H3 phosphorylated at 'Thr-3' (H3pT3) during mitosis. The complex with RAN plays a role in mitotic spindle formation by serving as a physical scaffold to help deliver the RAN effector molecule TPX2 to microtubules. May counteract a default induction of apoptosis in G2/M phase. The acetylated form represses STAT3 transactivation of target gene promoters. May play a role in neoplasia. Inhibitor of CASP3 and CASP7. Essential for the maintenance of mitochondrial integrity and function. The polypeptide is Baculoviral IAP repeat-containing protein 5 (Cavia porcellus (Guinea pig)).